The sequence spans 101 residues: Small ribosomal subunit protein uS10 (101 aa).

The protein belongs to the universal ribosomal protein uS10 family. As to quaternary structure, part of the 30S ribosomal subunit.

Involved in the binding of tRNA to the ribosomes. This chain is Small ribosomal subunit protein uS10, found in Mycobacterium bovis (strain ATCC BAA-935 / AF2122/97).